The chain runs to 727 residues: Engulfment and cell motility protein 1 (727 aa).

Position 18 is a phosphotyrosine; by HCK (Tyr-18). N6-acetyllysine is present on residues Lys-100 and Lys-105. Residue Tyr-216 is modified to Phosphotyrosine; by HCK. The region spanning Ala-319–Leu-492 is the ELMO domain. Ser-344 carries the phosphoserine modification. Tyr-395 and Tyr-511 each carry phosphotyrosine; by HCK. The PH domain occupies Arg-555–Asp-676. An SH3-binding motif is present at residues Pro-707 to Pro-714. At Tyr-720 the chain carries Phosphotyrosine; by HCK.

Interacts directly with the SH3-domain of DOCK1 via its SH3-binding site. Probably forms a heterotrimeric complex with DOCK1 and RAC1. Interacts with PLEKHG6. Interacts with HCK (via SH3 domain). Interacts with ADGRB1. Interacts with ADGRB3. Interacts with DOCK5. Post-translationally, phosphorylated by HCK.

The protein resides in the cytoplasm. It is found in the cell membrane. Involved in cytoskeletal rearrangements required for phagocytosis of apoptotic cells and cell motility. Acts in association with DOCK1 and CRK. Was initially proposed to be required in complex with DOCK1 to activate Rac Rho small GTPases. May enhance the guanine nucleotide exchange factor (GEF) activity of DOCK1. In Mus musculus (Mouse), this protein is Engulfment and cell motility protein 1 (Elmo1).